A 703-amino-acid polypeptide reads, in one-letter code: Protein STRUBBELIG-RECEPTOR FAMILY 8 (703 aa).

The first 27 residues, 1–27 (MAIGDRAMFTVLLLFIASISGFSVVRC), serve as a signal peptide directing secretion. Residues 28–291 (VTDPSDVQAL…GKGLSGGVVT (264 aa)) are Extracellular-facing. 7 LRR repeats span residues 96-120 (LKSL…LPPN), 122-142 (TSLN…ISAM), 143-165 (GSLS…IFAD), 166-190 (HKSL…LSTV), 192-212 (TLSV…VLSG), 213-233 (LPLK…PKEL), and 234-256 (SSIQ…PQPE). Asn-120, Asn-130, Asn-149, and Asn-178 each carry an N-linked (GlcNAc...) asparagine glycan. A glycan (N-linked (GlcNAc...) asparagine) is linked at Asn-226. Positions 247–284 (DNVPASPQPERPGKKETPSGSKKPKIGSEEKSSDSGKG) are disordered. The helical transmembrane segment at 292 to 312 (GIVFGSLFVAGIIALVLYLCL) threads the bilayer. At 313-703 (HKKKRKVRGS…PEHEHVDISF (391 aa)) the chain is on the cytoplasmic side. One can recognise a Protein kinase domain in the interval 395 to 672 (FSQENIIGEG…SEVVQQLVRL (278 aa)). ATP-binding positions include 401–409 (IGEGSLGRV) and Lys-423.

The protein belongs to the protein kinase superfamily. Ser/Thr protein kinase family. In terms of tissue distribution, expressed in seedlings, roots, stems, leaves, flowers and siliques.

It localises to the membrane. The protein is Protein STRUBBELIG-RECEPTOR FAMILY 8 (SRF8) of Arabidopsis thaliana (Mouse-ear cress).